Here is a 263-residue protein sequence, read N- to C-terminus: Thiamine thiazole synthase (263 aa).

NAD(+) is bound by residues serine 36, glutamate 55 to arginine 56, glycine 63, valine 127, and histidine 157 to aspartate 159. Positions 159 and 174 each coordinate Fe cation. Residue methionine 228 coordinates NAD(+). Arginine 238 is a glycine binding site.

It belongs to the THI4 family. In terms of assembly, homooctamer; tetramer of dimers. Fe(2+) serves as cofactor.

The enzyme catalyses hydrogen sulfide + glycine + NAD(+) = ADP-5-ethyl-4-methylthiazole-2-carboxylate + nicotinamide + 3 H2O + H(+). It functions in the pathway cofactor biosynthesis; thiamine diphosphate biosynthesis. Functionally, involved in the biosynthesis of the thiazole moiety of thiamine. Catalyzes the conversion of NAD and glycine to adenosine diphosphate 5-(2-hydroxyethyl)-4-methylthiazole-2-carboxylate (ADT), an adenylated thiazole intermediate, using free sulfide as a source of sulfur. This Solidesulfovibrio magneticus (strain ATCC 700980 / DSM 13731 / RS-1) (Desulfovibrio magneticus) protein is Thiamine thiazole synthase.